A 560-amino-acid chain; its full sequence is 2-isopropylmalate synthase (560 aa).

The 274-residue stretch at 30 to 303 folds into the Pyruvate carboxyltransferase domain; it reads PVWCSVDLRD…DPEIDCSNIE (274 aa). 4 residues coordinate Mg(2+): D39, H242, H244, and N278. The tract at residues 437–560 is regulatory domain; that stretch reads QPEGRLRFVD…RVLDVKAGKA (124 aa).

Belongs to the alpha-IPM synthase/homocitrate synthase family. LeuA type 2 subfamily. As to quaternary structure, homodimer. Mg(2+) serves as cofactor.

Its subcellular location is the cytoplasm. The enzyme catalyses 3-methyl-2-oxobutanoate + acetyl-CoA + H2O = (2S)-2-isopropylmalate + CoA + H(+). The protein operates within amino-acid biosynthesis; L-leucine biosynthesis; L-leucine from 3-methyl-2-oxobutanoate: step 1/4. Its function is as follows. Catalyzes the condensation of the acetyl group of acetyl-CoA with 3-methyl-2-oxobutanoate (2-ketoisovalerate) to form 3-carboxy-3-hydroxy-4-methylpentanoate (2-isopropylmalate). The sequence is that of 2-isopropylmalate synthase from Rhizobium johnstonii (strain DSM 114642 / LMG 32736 / 3841) (Rhizobium leguminosarum bv. viciae).